The sequence spans 440 residues: MKNVGIKKAALQMSRYVLASKQVQRALKLLGLPASRANEVSGIPKPADTSLSFPGYEAFALHGEAWQAAGEQKPIILMFGVHPWKRDVLARYFSDFRVAYVRTNTSWTKVQTSFCQFTPQAFVFWGMTEIRAAKNYAIKSSIPLWRVEDGFLRSVGLGAQHVLPLSLAVDTTGIYFDPSRPSTLETLISEIGVTENATLIERARRCMSMISAFGLSKYNVGQDVPLKRLPPSDRRRVLVVGQVEDDASIVMGCAARYTNNDIVRITQKENPEAEVIYRPHPDVLGGHRKEFSNPRDVANICTILSGDYDLGSLLDSVDHVYTITSLLGFEALIRRKKVTVFGAPFYSGWGLTDDRQPTPRRTRKPSLDELFAAAYILYPRYCVGSLGSSAEIEHAIMSLALEKNGVPRELAEGVSSALPAEAINVDCVSQTLEGLKSIPS.

The protein to E.coli capsule polysaccharide export protein KpsC.

The protein localises to the cytoplasm. Involved in the invasion of nitrogen fixation nodules. May be involved in the biosynthesis of lipopolysaccharides as an enzyme or a regulatory protein. This chain is Lipopolysaccharide-processing protein LpsZ (lpsZ), found in Rhizobium meliloti (Ensifer meliloti).